A 365-amino-acid chain; its full sequence is MAAAAAMTAAGCGGAGAARSLSRFRGCLAGALLGDCVGAVYEARDTVDLTSVLRQVQDLEPDPGSPGSARTEALCYTDDTAMARALVQSLLAKEAFDEVDMAHRFAQEYKKDPDRGYGAGVITVFRKHLSPRCRDVFEPARAQFNGKGSYGNGGAMRVAGISLAYSSVQDVQKFARLSAQLTHASSLGYNGAILQALAVHLALQGESSSEHFLEQLLGHMEELESDAQSVLDARELGMEERPYSSRLKKIGELLEQDSVTREEVVSELGNGIAAFESVPTAIYCFLRCMEPDPEIPSTFNSLQRTLVYSISLGGDTDTIATMAGAIAGAYYGMEQVPESWQQSCEGYEETDVLAQSLHRVFQKSL.

Residues glutamate 42, threonine 77, aspartate 78, and aspartate 79 each contribute to the Mg(2+) site. Position 78 (aspartate 78) interacts with substrate. Residues lysine 147 to glycine 153, histidine 183, leucine 236, and isoleucine 272 contribute to the substrate site. Mg(2+)-binding residues include aspartate 315, aspartate 317, and threonine 318.

The protein belongs to the ADP-ribosylglycohydrolase family. In terms of assembly, monomer. The cofactor is Mg(2+).

It is found in the nucleus. Its subcellular location is the cytoplasm. It localises to the chromosome. The protein localises to the mitochondrion matrix. The enzyme catalyses [(1''-&gt;2')-ADP-alpha-D-ribose](n) + H2O = [(1''-&gt;2')-ADP-alpha-D-ribose](n-1) + ADP-D-ribose. It carries out the reaction 1''-O-acetyl-ADP-alpha-D-ribose + H2O = ADP-D-ribose + acetate + H(+). The catalysed reaction is O-(ADP-D-ribosyl)-L-seryl-[protein] + H2O = ADP-D-ribose + L-seryl-[protein]. It catalyses the reaction alpha-NAD(+) + H2O = ADP-D-ribose + nicotinamide + H(+). Its activity is regulated as follows. The protein undergoes a dramatic conformational switch from closed to open states upon substrate-binding, which enables specific substrate recognition for the 1''-O-linkage. The glutamate flap (Glu-42) blocks substrate entrance to Mg(2+) in the unliganded closed state. In presence of substrate, Glu-42 is ejected from the active site: this closed-to-open transition significantly widens the substrate-binding channel and precisely positions the scissile 1''-O-linkage for cleavage while securing tightly 2'- and 3'-hydroxyls of ADP-ribose. Its function is as follows. ADP-ribosylhydrolase that preferentially hydrolyzes the scissile alpha-O-linkage attached to the anomeric C1'' position of ADP-ribose and acts on different substrates, such as proteins ADP-ribosylated on serine and threonine, free poly(ADP-ribose) and O-acetyl-ADP-D-ribose. Specifically acts as a serine mono-ADP-ribosylhydrolase by mediating the removal of mono-ADP-ribose attached to serine residues on proteins, thereby playing a key role in DNA damage response. Serine ADP-ribosylation of proteins constitutes the primary form of ADP-ribosylation of proteins in response to DNA damage. Does not hydrolyze ADP-ribosyl-arginine, -cysteine, -diphthamide, or -asparagine bonds. Also able to degrade protein free poly(ADP-ribose), which is synthesized in response to DNA damage: free poly(ADP-ribose) acts as a potent cell death signal and its degradation by ADPRHL2 protects cells from poly(ADP-ribose)-dependent cell death, a process named parthanatos. Also hydrolyzes free poly(ADP-ribose) in mitochondria. Specifically digests O-acetyl-ADP-D-ribose, a product of deacetylation reactions catalyzed by sirtuins. Specifically degrades 1''-O-acetyl-ADP-D-ribose isomer, rather than 2''-O-acetyl-ADP-D-ribose or 3''-O-acetyl-ADP-D-ribose isomers. The protein is ADP-ribosylhydrolase ARH3 (ADPRS) of Bos taurus (Bovine).